Here is a 481-residue protein sequence, read N- to C-terminus: Glutamate--tRNA ligase (481 aa).

The 'HIGH' region motif lies at 9–19; it reads PSPTGNLHIGT. A 'KMSKS' region motif is present at residues 247–251; sequence KLSKR. Lys-250 provides a ligand contact to ATP.

Belongs to the class-I aminoacyl-tRNA synthetase family. Glutamate--tRNA ligase type 1 subfamily. As to quaternary structure, monomer.

Its subcellular location is the cytoplasm. It carries out the reaction tRNA(Glu) + L-glutamate + ATP = L-glutamyl-tRNA(Glu) + AMP + diphosphate. Catalyzes the attachment of glutamate to tRNA(Glu) in a two-step reaction: glutamate is first activated by ATP to form Glu-AMP and then transferred to the acceptor end of tRNA(Glu). The polypeptide is Glutamate--tRNA ligase (Nostoc punctiforme (strain ATCC 29133 / PCC 73102)).